Consider the following 70-residue polypeptide: Conotoxin Lt11.2 (70 aa).

An N-terminal signal peptide occupies residues 1–26; that stretch reads MMFRLTSVSCFLLFIVFLNLVVLTNA. 4 disulfides stabilise this stretch: Cys-27–Cys-41, Cys-34–Cys-46, Cys-40–Cys-50, and Cys-45–Cys-54. A Proline amide modification is found at Pro-57. Residues 61–70 constitute a propeptide that is removed on maturation; that stretch reads EKLQEFFRQR.

It belongs to the conotoxin I2 superfamily. In terms of tissue distribution, expressed by the venom duct.

Its subcellular location is the secreted. The protein is Conotoxin Lt11.2 of Conus litteratus (Lettered cone).